A 216-amino-acid chain; its full sequence is Large ribosomal subunit protein eL15 (216 aa).

The segment covering 170-188 (RGLRKSKGFKGTVKHKWSR) has biased composition (basic residues). The segment at 170 to 201 (RGLRKSKGFKGTVKHKWSRKQKEREEKKRHEA) is disordered. Positions 189 to 201 (KQKEREEKKRHEA) are enriched in basic and acidic residues.

It belongs to the eukaryotic ribosomal protein eL15 family.

The sequence is that of Large ribosomal subunit protein eL15 from Saccharolobus islandicus (strain M.16.27) (Sulfolobus islandicus).